Consider the following 1006-residue polypeptide: DNA polymerase (1006 aa).

It belongs to the DNA polymerase type-B family. As to quaternary structure, interacts with OPG148. Component of the Uracil-DNA glycosylase(UDG)-OPG148-polymerase complex; OPG148 and OPG116/UDG form a heterodimeric processivity factor that associates with OPG071 to form the processive polymerase holoenzyme.

The catalysed reaction is DNA(n) + a 2'-deoxyribonucleoside 5'-triphosphate = DNA(n+1) + diphosphate. Functionally, catalyzes DNA synthesis. Acquires processivity by associating with a heterodimeric processivity factor comprised of the viral OPG148 and OPG116 proteins, thereby forming the DNA polymerase holoenzyme. Displays 3'- to 5' exonuclease activity. Might participate in viral DNA recombination. Does not perform OPG116/D4synthesis across an abasic site. The sequence is that of DNA polymerase (OPG071) from Homo sapiens (Human).